We begin with the raw amino-acid sequence, 124 residues long: MKTIFYIALGGGLGSVLRYLTTLVINKYVQTTFPYATFVTNIAGCLLIGLFFGYLEKQNAVSPYLKFFLITGLCGGYTTFSAFSNENIQLLQSNQILIAFLYISLSVFLGLMATWTGLIIAKEL.

4 helical membrane passes run 4–24 (IFYI…TTLV), 35–55 (YATF…FGYL), 63–83 (PYLK…FSAF), and 96–116 (ILIA…ATWT). Gly75 and Thr78 together coordinate Na(+).

It belongs to the fluoride channel Fluc/FEX (TC 1.A.43) family.

It is found in the cell inner membrane. It catalyses the reaction fluoride(in) = fluoride(out). Its activity is regulated as follows. Na(+) is not transported, but it plays an essential structural role and its presence is essential for fluoride channel function. In terms of biological role, fluoride-specific ion channel. Important for reducing fluoride concentration in the cell, thus reducing its toxicity. In Flavobacterium psychrophilum (strain ATCC 49511 / DSM 21280 / CIP 103535 / JIP02/86), this protein is Fluoride-specific ion channel FluC.